The sequence spans 397 residues: Ethanolaminephosphotransferase 1 (397 aa).

Alanine 2 carries the N-acetylalanine modification. The next 10 helical transmembrane spans lie at 47 to 69 (WLAP…LLMA), 84 to 103 (HVPD…AYTL), 123 to 145 (LFDH…SIFG), 150 to 172 (GVSV…LSHW), 179 to 201 (ILFL…IVTA), 221 to 243 (LFTA…LNFF), 256 to 278 (VYEA…AWIL), 291 to 310 (VFYF…LIVC), 317 to 339 (CPTL…LGVA), and 344 to 366 (SILL…VRVV). Selenocysteine 387 is a non-standard amino acid (selenocysteine).

Belongs to the CDP-alcohol phosphatidyltransferase class-I family. The cofactor is Mg(2+). Mn(2+) is required as a cofactor. In terms of tissue distribution, widely expressed. Abundant in brain, placenta, liver and pancreas, followed by heart, skeletal muscle, lung and kidney. In brain it is strongly expressed in cerebellum, followed by the occipital pole and the frontal lobe.

It is found in the endoplasmic reticulum membrane. The enzyme catalyses CDP-ethanolamine + a 1,2-diacyl-sn-glycerol = a 1,2-diacyl-sn-glycero-3-phosphoethanolamine + CMP + H(+). It catalyses the reaction 1-O-alkyl-2-acyl-sn-glycerol + CDP-ethanolamine = a 1-O-alkyl-2-acyl-sn-glycero-3-phosphoethanolamine + CMP + H(+). Its pathway is phospholipid metabolism; phosphatidylethanolamine biosynthesis; phosphatidylethanolamine from ethanolamine: step 3/3. Ethanolaminephosphotransferase that catalyzes the transfer of phosphoethanolamine (PE) from CDP-ethanolamine to lipid acceptors, the final step in the synthesis of PE via the 'Kennedy' pathway. PE is the second most abundant phospholipid of membranes in mammals and is involved in various membrane-related cellular processes. The enzyme is critical for the synthesis of several PE species and also catalyzes the synthesis of plasmanyl-PE, a lipid required for proper myelination and neurodevelopment, from 1-alkyl-2-acylglycerol. This chain is Ethanolaminephosphotransferase 1, found in Homo sapiens (Human).